The following is a 162-amino-acid chain: Cyclic pyranopterin monophosphate synthase (162 aa).

Substrate contacts are provided by residues 75 to 77 and 113 to 114; these read LCH and ME. Residue Asp128 is part of the active site.

Belongs to the MoaC family. As to quaternary structure, homohexamer; trimer of dimers.

It carries out the reaction (8S)-3',8-cyclo-7,8-dihydroguanosine 5'-triphosphate = cyclic pyranopterin phosphate + diphosphate. Its pathway is cofactor biosynthesis; molybdopterin biosynthesis. Its function is as follows. Catalyzes the conversion of (8S)-3',8-cyclo-7,8-dihydroguanosine 5'-triphosphate to cyclic pyranopterin monophosphate (cPMP). The protein is Cyclic pyranopterin monophosphate synthase of Burkholderia cenocepacia (strain ATCC BAA-245 / DSM 16553 / LMG 16656 / NCTC 13227 / J2315 / CF5610) (Burkholderia cepacia (strain J2315)).